We begin with the raw amino-acid sequence, 1977 residues long: MSTKQSPALQLAEGQLTKLTSESEEIRMRALDQIETRFIRCLQLGEPIQFKPVLLLKQLIRWFGYTPPLVPDRVLAMIMELLRSEYAEAVIRKIPYERFKAELQKVRRVLHKQESKRVSELLDDMNLLLLEKYNIDRVTPSVSSLSSNDIPSQATESADSSSNQIYDNLKPEDYEPSWSHPCLDDVATMKSMIDLPRNSVELQLQLTELIIRMGDYPTEYFLQPPFVFLHLVQLQTMTDGSLIHVNRALIACLRLLQQRILLRRNTLSYADRFDPPSRPKQVKVVSALVILLENCMKLIRPLLFSCTNDNWHIMELIVEIVRTHDVLSSKIPLVSITLIADAVKSLLAYCNSVEGSCMTQLMDSLRIPRLQSLILNGVLHDMVALNINYDKRMDRRQAKALIQPIVLDSAYLSGMPERMKSLNTLISSLDSGPSPDEELIKLKRAYSVALNQLHPNTELTGSLLIQKYRQVCLVLVQLGSETLVKQLFGAVVKCIPFYAGNLKLRKDADELLYTLVDLPALKLRSLIYRLMIKSTVAHFHSFMNKTVYMTGCSNVDLIRQHILGVPLTPLLLRRMIIQSSEANTSERMQQWCLDYPIMIMKLNAILAPQDFSVVFPLLLPVLPLLISRSVTHKILHNVIWNVLEPDSSRLDPQLMLRGYVYFMFHPDGEVRSEATTTIAYVLQCQEQTNRYLPTASNVPVEHIANDLCIIQPPFCYRSIFIKCSDERFQGQRSLDALFRLLQAKDIKSNIRKSTMTQLNVLLRNWRACEEFSTKEDGYRLIMESLHNALKKGNDTDILLPTVSILMKLLFNDDEFRLEVANTFGVYTLLLRALFLFPHLEQLRQDVSICLFQMLFQNCITSTEDKLVLNANMEPLILPVTYEIEHKVIPTAVTEGLELQQNVEATHFGRDRAKAAQHWRLYMAYRVCQVPSSITLESVSALDIRESLKIKMADLALVRSSDLNEQLSCQFIAAENCSKHEDLQKTVSAIQLFLVVLRNSLSDTVAENLWKLIHKYIRLAPGNEADDKVYKSMLDLCVTCIRFSQPHAINGLSYALETDHHHSFQLLLHDSQISLDKLFLICQCMMQLLSNELSDDSMNWYGKFFMQLSAVAKTHFELRQLQHVRCILCMLRFVSERNLKFSNAQLMSYSQHFIQLSSNLRTSTQTGSEWQRDCLYIICQLQIHLIYQEPKASSKASIPNDVGASYKVLRYFLTLCGHGDSEVRALSWVSLANWITICGSQVAEILPRLDFLPGGLPACCLTTLTDAHEMMLIRELAGRVFILLMPLIGAESSLELLRKHDLLKTAYNSLKAIHDTPWMFKKIVGERHSCEVISCYVAICTKMVAMKPEWCAALCGHSLMSGLSDVMKKLKSQASCSIPLVELCASQICELYSMCYTNNFEFLKMTICRDSVFLQNYLTLINDVLSLECPEYMVIPLLKMFLIFCTDSNSNSFLIEQIKNKPSLFMDFFLFGLHVKLINSPFQRFTLSALSLVFTKAQLAAYDISMLSELEKFELAFSDPDIAKDGKQEFESKKKQSVSQCIYDESSDNSDDNKQRPNHAIQATNAAIIIFHRLDQLFDRYYLSKALNFLELPAVGQVQVCEALGELLKASTWAVKAAGESKLLGKVVHILDDFLNDEKIGNAAVYVKRVGPHKAQSIISNLLVLINMLSQWHSSPNSEIIQTSMAANIAKILIRIWPWLSHSYHLKKVTVQLIMFLTEHSFEMCKQISLLQSGHAQSLLHLMARVADFETTKKEIPNKEPSLNMVPALRVMVNCCCCTEGRLSLSKMNLLDMFDTILPANPCSTHLKVRPPVLIAWLGFWEVFSRYDVGGKACHLQSLINTIRRSPPLSHKRILCLRILRNMCFFNGNRPRLVELADFINLLRDILEQRVQKAPTSEKNGLNSFEEHRLAVLMLWKLFGFGAKYKGMLRGTKLFKLLIGLRVEMSVVFSEEENKYAGVPYANDLAKLLEKLMESMRQ.

Positions 141 to 166 (SVSSLSSNDIPSQATESADSSSNQIY) are disordered.

Belongs to the rotatin family. Interacts with Rcd4;this complex is recruited to daughter centrioles before their conversion to centrosomes.

The protein resides in the cytoplasm. It localises to the cytoskeleton. The protein localises to the microtubule organizing center. Its subcellular location is the centrosome. It is found in the centriole. Its function is as follows. Participes in the structural integrity of both centrioles and basal bodies and in centriole cohesion. Participates in the later stages of centriole assembly through the interaction with Rcd4 leading to the centriole to centrosome conversion. In Drosophila melanogaster (Fruit fly), this protein is Protein rotatin homolog.